Consider the following 273-residue polypeptide: Dermonecrotic toxin LsaSicTox-alphaIB1ai (273 aa).

Histidine 5 is a catalytic residue. Mg(2+) is bound by residues glutamate 25 and aspartate 27. Histidine 41 functions as the Nucleophile in the catalytic mechanism. 2 disulfides stabilise this stretch: cysteine 45/cysteine 51 and cysteine 47/cysteine 190. Position 85 (aspartate 85) interacts with Mg(2+).

It belongs to the arthropod phospholipase D family. Class II subfamily. Mg(2+) is required as a cofactor. In terms of tissue distribution, expressed by the venom gland.

Its subcellular location is the secreted. It carries out the reaction an N-(acyl)-sphingosylphosphocholine = an N-(acyl)-sphingosyl-1,3-cyclic phosphate + choline. It catalyses the reaction an N-(acyl)-sphingosylphosphoethanolamine = an N-(acyl)-sphingosyl-1,3-cyclic phosphate + ethanolamine. The catalysed reaction is a 1-acyl-sn-glycero-3-phosphocholine = a 1-acyl-sn-glycero-2,3-cyclic phosphate + choline. The enzyme catalyses a 1-acyl-sn-glycero-3-phosphoethanolamine = a 1-acyl-sn-glycero-2,3-cyclic phosphate + ethanolamine. Dermonecrotic toxins cleave the phosphodiester linkage between the phosphate and headgroup of certain phospholipids (sphingolipid and lysolipid substrates), forming an alcohol (often choline) and a cyclic phosphate. This toxin acts on sphingomyelin (SM). It may also act on ceramide phosphoethanolamine (CPE), lysophosphatidylcholine (LPC) and lysophosphatidylethanolamine (LPE), but not on lysophosphatidylserine (LPS), and lysophosphatidylglycerol (LPG). It acts by transphosphatidylation, releasing exclusively cyclic phosphate products as second products. Induces dermonecrosis, hemolysis, increased vascular permeability, edema, inflammatory response, and platelet aggregation. The protein is Dermonecrotic toxin LsaSicTox-alphaIB1ai of Loxosceles sabina (Tucson recluse spider).